A 219-amino-acid chain; its full sequence is MSTPLSQPAAASSSATHVTTKIAAKSDNNLVWLDMEMTGLSPENDRIIEVAMVVTDSELNVLAEGPVLVIHQPDEILDGMDAWNKGTHGRSGLIDKVKASTTTEAQAEADLLDFLKKWVPKSKSPMCGNSICQDRRFMARYMPKLEAYFHYRNLDVSTLKELCKRWQPAIAKGFIKRQQHTAYADIVESIEELRYYRQHFIRDVPQTPEAEALASSVAP.

The 164-residue stretch at 30–193 (LVWLDMEMTG…ADIVESIEEL (164 aa)) folds into the Exonuclease domain. Tyrosine 151 is an active-site residue.

This sequence belongs to the oligoribonuclease family.

It localises to the cytoplasm. Its function is as follows. 3'-to-5' exoribonuclease specific for small oligoribonucleotides. The sequence is that of Oligoribonuclease from Ralstonia nicotianae (strain ATCC BAA-1114 / GMI1000) (Ralstonia solanacearum).